We begin with the raw amino-acid sequence, 239 residues long: Serine protease SplC (239 aa).

The signal sequence occupies residues 1–36; sequence MNKNIVIKSMAALAILTSVTGINAAVVEETQQIANA. Catalysis depends on charge relay system residues His-75, Asp-113, and Ser-193.

Belongs to the peptidase S1B family.

Its subcellular location is the secreted. This chain is Serine protease SplC (splC), found in Staphylococcus aureus.